A 239-amino-acid chain; its full sequence is LexA repressor (239 aa).

A DNA-binding region (H-T-H motif) is located at residues 26–46 (FDEMKDALDLKSKSGIHRLIT). Active-site for autocatalytic cleavage activity residues include serine 160 and lysine 198.

The protein belongs to the peptidase S24 family. As to quaternary structure, homodimer.

The catalysed reaction is Hydrolysis of Ala-|-Gly bond in repressor LexA.. Its function is as follows. Represses a number of genes involved in the response to DNA damage (SOS response), including recA and lexA. In the presence of single-stranded DNA, RecA interacts with LexA causing an autocatalytic cleavage which disrupts the DNA-binding part of LexA, leading to derepression of the SOS regulon and eventually DNA repair. The sequence is that of LexA repressor from Methylobacterium sp. (strain 4-46).